A 254-amino-acid chain; its full sequence is 5'-nucleotidase SurE (254 aa).

A divalent metal cation contacts are provided by Asp8, Asp9, Ser39, and Asn91.

This sequence belongs to the SurE nucleotidase family. Requires a divalent metal cation as cofactor.

The protein localises to the cytoplasm. The catalysed reaction is a ribonucleoside 5'-phosphate + H2O = a ribonucleoside + phosphate. Functionally, nucleotidase that shows phosphatase activity on nucleoside 5'-monophosphates. The polypeptide is 5'-nucleotidase SurE (Pseudoalteromonas translucida (strain TAC 125)).